Here is a 248-residue protein sequence, read N- to C-terminus: 4-hydroxy-tetrahydrodipicolinate reductase (248 aa).

NAD(+) is bound by residues glycine 74–threonine 76 and serine 99–phenylalanine 102. The active-site Proton donor/acceptor is histidine 134. Histidine 135 is a binding site for (S)-2,3,4,5-tetrahydrodipicolinate. Lysine 138 (proton donor) is an active-site residue. Glycine 144–threonine 145 contacts (S)-2,3,4,5-tetrahydrodipicolinate.

This sequence belongs to the DapB family.

Its subcellular location is the cytoplasm. It catalyses the reaction (S)-2,3,4,5-tetrahydrodipicolinate + NAD(+) + H2O = (2S,4S)-4-hydroxy-2,3,4,5-tetrahydrodipicolinate + NADH + H(+). It carries out the reaction (S)-2,3,4,5-tetrahydrodipicolinate + NADP(+) + H2O = (2S,4S)-4-hydroxy-2,3,4,5-tetrahydrodipicolinate + NADPH + H(+). It participates in amino-acid biosynthesis; L-lysine biosynthesis via DAP pathway; (S)-tetrahydrodipicolinate from L-aspartate: step 4/4. Functionally, catalyzes the conversion of 4-hydroxy-tetrahydrodipicolinate (HTPA) to tetrahydrodipicolinate. In Chlorobium phaeobacteroides (strain BS1), this protein is 4-hydroxy-tetrahydrodipicolinate reductase.